A 118-amino-acid chain; its full sequence is Heavy metal-associated isoprenylated plant protein 12 (118 aa).

Positions 1–65 (MQVVVLKLDV…KICHTEFISV (65 aa)) constitute an HMA domain. The segment at 68–87 (VKEPEKKKPDDPKKPETKPP) is disordered. The segment covering 69 to 86 (KEPEKKKPDDPKKPETKP) has biased composition (basic and acidic residues). At Cys-115 the chain carries Cysteine methyl ester. A lipid anchor (S-farnesyl cysteine) is attached at Cys-115. The propeptide at 116–118 (VTS) is removed in mature form.

Belongs to the HIPP family.

Functionally, probable heavy-metal-binding protein. In Arabidopsis thaliana (Mouse-ear cress), this protein is Heavy metal-associated isoprenylated plant protein 12.